The chain runs to 794 residues: ATP-dependent RNA helicase SUPV3L1, mitochondrial (794 aa).

A mitochondrion-targeting transit peptide spans 1–30; that stretch reads MRRCAWPLLRLSSRVGLALRHGGAVRLRQA. The Helicase ATP-binding domain maps to 182–322; it reads EARAIQRKII…AIDLVTELMY (141 aa). 195–202 is a binding site for ATP; that stretch reads GPTNSGKT. The Helicase C-terminal domain occupies 341–506; it reads VLDYALESLD…GLHPTPEQIE (166 aa). Disordered regions lie at residues 678-741 and 764-794; these read EVMS…HGRG and EWQD…KKKK. Residues 689 to 704 show a composition bias toward basic and acidic residues; that stretch reads TKRDARTVSDHRDAKS.

It belongs to the helicase family. The cofactor is Mg(2+). Requires Mn(2+) as cofactor.

The protein localises to the nucleus. The protein resides in the mitochondrion matrix. It is found in the mitochondrion nucleoid. The enzyme catalyses ATP + H2O = ADP + phosphate + H(+). Major helicase player in mitochondrial RNA metabolism. Component of the mitochondrial degradosome (mtEXO) complex, that degrades 3' overhang double-stranded RNA with a 3'-to-5' directionality in an ATP-dependent manner. ATPase and ATP-dependent multisubstrate helicase, able to unwind double-stranded (ds) DNA and RNA, and RNA/DNA heteroduplexes in the 5'-to-3' direction. Plays a role in the RNA surveillance system in mitochondria; regulates the stability of mature mRNAs, the removal of aberrantly formed mRNAs and the rapid degradation of non coding processing intermediates. Also implicated in recombination and chromatin maintenance pathways. May protect cells from apoptosis. Associates with mitochondrial DNA. The chain is ATP-dependent RNA helicase SUPV3L1, mitochondrial (SUPV3L1) from Gallus gallus (Chicken).